A 160-amino-acid chain; its full sequence is Cytochrome b6-f complex subunit 4 (160 aa).

Transmembrane regions (helical) follow at residues 36–56 (LLYI…GLAV), 95–115 (LLGV…PFLE), and 131–151 (TVFL…ALPI).

It belongs to the cytochrome b family. PetD subfamily. In terms of assembly, the 4 large subunits of the cytochrome b6-f complex are cytochrome b6, subunit IV (17 kDa polypeptide, petD), cytochrome f and the Rieske protein, while the 4 small subunits are petG, petL, petM and petN. The complex functions as a dimer.

Its subcellular location is the plastid. The protein resides in the chloroplast thylakoid membrane. Its function is as follows. Component of the cytochrome b6-f complex, which mediates electron transfer between photosystem II (PSII) and photosystem I (PSI), cyclic electron flow around PSI, and state transitions. This Physcomitrium patens (Spreading-leaved earth moss) protein is Cytochrome b6-f complex subunit 4.